Reading from the N-terminus, the 547-residue chain is Delta-guaiene synthase 2 (547 aa).

Mg(2+) contacts are provided by Asp-299, Asp-303, and Asp-444. The DDXXD motif motif lies at 299–303; that stretch reads DDTYD.

This sequence belongs to the terpene synthase family. It depends on Mg(2+) as a cofactor.

It carries out the reaction (2E,6E)-farnesyl diphosphate = delta-guaiene + diphosphate. The enzyme catalyses (2E,6E)-farnesyl diphosphate = alpha-guaiene + diphosphate. The protein operates within secondary metabolite biosynthesis; terpenoid biosynthesis. Its function is as follows. Sesquiterpene synthase involved in the biosynthesis of delta-guaiene (53.7%) and alpha-guaiene (44.6%), two structures composed of five- and seven-membered rings. Also produces 1.7% of alpha-humulene. In Aquilaria crassna (Eagle wood), this protein is Delta-guaiene synthase 2 (C3).